Here is a 692-residue protein sequence, read N- to C-terminus: ATP-dependent DNA helicase DinG (692 aa).

The region spanning 16–293 is the Helicase ATP-binding domain; sequence NLGNQLDNFI…AELAEYKKAA (278 aa). An ATP-binding site is contributed by 56–63; sequence AGTGIGKS. Cys123 lines the [4Fe-4S] cluster pocket. A DEAH box motif is present at residues 134-137; that stretch reads NNDQ. [4Fe-4S] cluster is bound by residues Cys192 and Cys202. Positions 247–250 match the DEAH box motif; that stretch reads DEAH. A Helicase C-terminal domain is found at 514–692; the sequence is LIKTLPEYLE…PPFKRVIEYS (179 aa).

The protein belongs to the helicase family. DinG subfamily. Type 1 sub-subfamily. [4Fe-4S] cluster serves as cofactor.

The enzyme catalyses Couples ATP hydrolysis with the unwinding of duplex DNA at the replication fork by translocating in the 5'-3' direction. This creates two antiparallel DNA single strands (ssDNA). The leading ssDNA polymer is the template for DNA polymerase III holoenzyme which synthesizes a continuous strand.. It catalyses the reaction ATP + H2O = ADP + phosphate + H(+). Functionally, DNA-dependent ATPase and 5'-3' DNA helicase. Unwinds D-loops, R-loops, forked DNA and G-quadruplex DNA. In Photobacterium profundum (strain SS9), this protein is ATP-dependent DNA helicase DinG.